A 387-amino-acid polypeptide reads, in one-letter code: EARP-interacting protein homolog (387 aa).

WD repeat units lie at residues 132 to 172, 182 to 222, 226 to 266, 270 to 310, and 345 to 385; these read TAHG…SKAV, KGQL…QIYC, AHGQ…DPVK, EHSH…SEPF, and EHED…KYHI.

Belongs to the WD repeat EIPR1 family.

The polypeptide is EARP-interacting protein homolog (Gekko japonicus (Schlegel's Japanese gecko)).